We begin with the raw amino-acid sequence, 314 residues long: tRNA dimethylallyltransferase 1 (314 aa).

8-15 provides a ligand contact to ATP; sequence GPTGTGKS. Residue 10–15 participates in substrate binding; it reads TGTGKS.

Belongs to the IPP transferase family. As to quaternary structure, monomer. Mg(2+) serves as cofactor.

The enzyme catalyses adenosine(37) in tRNA + dimethylallyl diphosphate = N(6)-dimethylallyladenosine(37) in tRNA + diphosphate. Functionally, catalyzes the transfer of a dimethylallyl group onto the adenine at position 37 in tRNAs that read codons beginning with uridine, leading to the formation of N6-(dimethylallyl)adenosine (i(6)A). The sequence is that of tRNA dimethylallyltransferase 1 from Mycobacterium marinum (strain ATCC BAA-535 / M).